The chain runs to 194 residues: Potassium-transporting ATPase KdpC subunit (194 aa).

The chain crosses the membrane as a helical span at residues L12–F34.

The protein belongs to the KdpC family. The system is composed of three essential subunits: KdpA, KdpB and KdpC.

It is found in the cell inner membrane. Its function is as follows. Part of the high-affinity ATP-driven potassium transport (or Kdp) system, which catalyzes the hydrolysis of ATP coupled with the electrogenic transport of potassium into the cytoplasm. This subunit acts as a catalytic chaperone that increases the ATP-binding affinity of the ATP-hydrolyzing subunit KdpB by the formation of a transient KdpB/KdpC/ATP ternary complex. The polypeptide is Potassium-transporting ATPase KdpC subunit (Salmonella choleraesuis (strain SC-B67)).